Here is a 258-residue protein sequence, read N- to C-terminus: 14-3-3-like protein 16R (258 aa).

The segment at 238-258 (DMQDDGTDEIKEAAPKPDNNE) is disordered. Positions 245–258 (DEIKEAAPKPDNNE) are enriched in basic and acidic residues.

Belongs to the 14-3-3 family.

The chain is 14-3-3-like protein 16R from Solanum tuberosum (Potato).